The following is a 286-amino-acid chain: Thymidylate synthase (286 aa).

DUMP is bound by residues R21 and 136–137 (RR). C156 functions as the Nucleophile in the catalytic mechanism. Residues 176–179 (RSVD), N187, and 217–219 (HIY) each bind dUMP. D179 provides a ligand contact to (6R)-5,10-methylene-5,6,7,8-tetrahydrofolate. Position 285 (A285) interacts with (6R)-5,10-methylene-5,6,7,8-tetrahydrofolate.

Belongs to the thymidylate synthase family. In terms of assembly, homodimer.

It carries out the reaction dUMP + (6R)-5,10-methylene-5,6,7,8-tetrahydrofolate = 7,8-dihydrofolate + dTMP. Its pathway is pyrimidine metabolism; dTTP biosynthesis. This Enterobacteria phage T4 (Bacteriophage T4) protein is Thymidylate synthase (TD).